We begin with the raw amino-acid sequence, 933 residues long: Probable Rho-type GTPase-activating protein 4 (933 aa).

2 LIM zinc-binding domains span residues 22–80 and 81–129; these read CFCI…LCVD and ICNG…CLPC. Disordered stretches follow at residues 181 to 200 and 304 to 338; these read PSSVLSGRMQNTSSPTNSLR and ENGTLPQLPKNESVVNPPPLRRSSTMNYKSVSTTT. Residues 325 to 338 are compositionally biased toward polar residues; it reads RSSTMNYKSVSTTT. Ser353 carries the phosphoserine modification. Disordered stretches follow at residues 415-435, 605-628, and 641-660; these read RLSSEPNGLKKRLTNSSNYEA, SSSFGIFNNDKKSNRTISTPSPRE, and GFRPKDNKDKESGGYNKRNS. Residues 619-628 show a composition bias toward polar residues; it reads RTISTPSPRE. Phosphoserine is present on Ser625. The span at 643 to 652 shows a compositional bias: basic and acidic residues; the sequence is RPKDNKDKES. A phosphoserine mark is found at Ser738 and Ser740. The Rho-GAP domain maps to 753–932; that stretch reads NRLTLLRVPT…FLIDHVHEVF (180 aa).

GTPase-activating protein for Rho-type proteins. This is Probable Rho-type GTPase-activating protein 4 (rga4) from Schizosaccharomyces pombe (strain 972 / ATCC 24843) (Fission yeast).